A 357-amino-acid polypeptide reads, in one-letter code: Serine protease 1 (357 aa).

An N-terminal signal peptide occupies residues methionine 1 to alanine 29. The propeptide occupies aspartate 30–glutamate 170. A disulfide bridge connects residues cysteine 184 and cysteine 204. Catalysis depends on charge relay system residues histidine 203, aspartate 232, and serine 313. Cysteines 307 and 333 form a disulfide.

This sequence belongs to the peptidase S1 family.

Its subcellular location is the secreted. In terms of biological role, serine protease that preferentially cleaves peptide bonds on the C-terminal side of aspartate and glutamate with a 10-fold higher reactivity for a glutamyl bond than an aspartyl bond. The sequence is that of Serine protease 1 from Streptomyces fradiae (Streptomyces roseoflavus).